The primary structure comprises 561 residues: Lanosterol 14-alpha demethylase (561 aa).

Cys501 serves as a coordination point for heme.

The protein belongs to the cytochrome P450 family. The cofactor is heme.

The protein resides in the membrane. The enzyme catalyses a 14alpha-methyl steroid + 3 reduced [NADPH--hemoprotein reductase] + 3 O2 = a Delta(14) steroid + formate + 3 oxidized [NADPH--hemoprotein reductase] + 4 H2O + 4 H(+). It catalyses the reaction a 14alpha-methyl steroid + reduced [NADPH--hemoprotein reductase] + O2 = a 14alpha-hydroxymethyl steroid + oxidized [NADPH--hemoprotein reductase] + H2O + H(+). It carries out the reaction a 14alpha-hydroxymethyl steroid + reduced [NADPH--hemoprotein reductase] + O2 = a 14alpha-formyl steroid + oxidized [NADPH--hemoprotein reductase] + 2 H2O + H(+). The catalysed reaction is a 14alpha-formyl steroid + reduced [NADPH--hemoprotein reductase] + O2 = a Delta(14) steroid + formate + oxidized [NADPH--hemoprotein reductase] + H2O + 2 H(+). The enzyme catalyses lanosterol + 3 reduced [NADPH--hemoprotein reductase] + 3 O2 = 4,4-dimethyl-5alpha-cholesta-8,14,24-trien-3beta-ol + formate + 3 oxidized [NADPH--hemoprotein reductase] + 4 H2O + 4 H(+). It catalyses the reaction lanosterol + reduced [NADPH--hemoprotein reductase] + O2 = 32-hydroxylanosterol + oxidized [NADPH--hemoprotein reductase] + H2O + H(+). It carries out the reaction 32-hydroxylanosterol + reduced [NADPH--hemoprotein reductase] + O2 = 32-oxolanosterol + oxidized [NADPH--hemoprotein reductase] + 2 H2O + H(+). The catalysed reaction is 32-oxolanosterol + reduced [NADPH--hemoprotein reductase] + O2 = 4,4-dimethyl-5alpha-cholesta-8,14,24-trien-3beta-ol + formate + oxidized [NADPH--hemoprotein reductase] + H2O + 2 H(+). The enzyme catalyses eburicol + 3 reduced [NADPH--hemoprotein reductase] + 3 O2 = 14-demethyleburicol + formate + 3 oxidized [NADPH--hemoprotein reductase] + 4 H2O + 4 H(+). It catalyses the reaction eburicol + reduced [NADPH--hemoprotein reductase] + O2 = 32-hydroxyeburicol + oxidized [NADPH--hemoprotein reductase] + H2O + H(+). It carries out the reaction 32-hydroxyeburicol + reduced [NADPH--hemoprotein reductase] + O2 = 32-oxoeburicol + oxidized [NADPH--hemoprotein reductase] + 2 H2O + H(+). The catalysed reaction is 32-oxoeburicol + reduced [NADPH--hemoprotein reductase] + O2 = 14-demethyleburicol + formate + oxidized [NADPH--hemoprotein reductase] + H2O + 2 H(+). It participates in steroid biosynthesis; zymosterol biosynthesis; zymosterol from lanosterol: step 1/6. Functionally, sterol 14alpha-demethylase that plays a critical role in the third module of ergosterol biosynthesis pathway, being ergosterol the major sterol component in fungal membranes that participates in a variety of functions. The third module or late pathway involves the ergosterol synthesis itself through consecutive reactions that mainly occur in the endoplasmic reticulum (ER) membrane. In filamentous fungi, during the initial step of this module, lanosterol (lanosta-8,24-dien-3beta-ol) can be metabolized to eburicol. Sterol 14alpha-demethylase catalyzes the three-step oxidative removal of the 14alpha-methyl group (C-32) of both these sterols in the form of formate, and converts eburicol and lanosterol to 14-demethyleburicol (4,4,24-trimethylergosta-8,14,24(28)-trienol) and 4,4-dimethyl-5alpha-cholesta-8,14,24-trien-3beta-ol, respectively, which are further metabolized by other enzymes in the pathway to ergosterol. Can also use substrates not intrinsic to fungi, such as 24,25-dihydrolanosterol (DHL), producing 4,4-dimethyl-8,14-cholestadien-3-beta-ol, but at lower rates than the endogenous substrates. This is Lanosterol 14-alpha demethylase (ERG11) from Mycosarcoma maydis (Corn smut fungus).